Here is a 137-residue protein sequence, read N- to C-terminus: Leaf-specific thionin DB4 (137 aa).

A signal peptide spans 1–28 (MAPSKSIKSVVICVLILGLVLEQVQVEG). 4 cysteine pairs are disulfide-bonded: cysteine 31–cysteine 68, cysteine 32–cysteine 60, cysteine 40–cysteine 58, and cysteine 44–cysteine 54. A propeptide spans 75 to 137 (LNLLPESGEP…DGAVIQSVEA (63 aa)) (acidic domain).

This sequence belongs to the plant thionin (TC 1.C.44) family. 4 C-C subfamily.

The protein resides in the secreted. In terms of biological role, thionins are small plant proteins which are toxic to animal cells. They seem to exert their toxic effect at the level of the cell membrane. Their precise function is not known. This is Leaf-specific thionin DB4 (THI1.3) from Hordeum vulgare (Barley).